The chain runs to 991 residues: Ribonuclease TUDOR 1 (991 aa).

Ala2 bears the N-acetylalanine mark. TNase-like domains are found at residues 8–151 (QWLK…RWSK), 186–364 (KPME…MWAN), 378–557 (QNFT…IHSA), and 587–714 (RRIP…IWEN). The interval 227–250 (RTTNGSVVETVPDEPNGDVSAESR) is disordered. The Tudor domain maps to 782-847 (NPKRGDIVLA…RPIDPSVSAA (66 aa)). Tyr970 bears the Phosphotyrosine mark. The disordered stretch occupies residues 971–991 (GDIESDDEDTGPARKPAGGRR). Ser975 is subject to Phosphoserine. Residue Thr980 is modified to Phosphothreonine.

In terms of tissue distribution, expressed in seeds, leaves, flowers, roots and siliques (at protein level). Accumulates in the cap and elongation zone of the root apices (at protein level).

The protein localises to the cytoplasm. It localises to the cytoplasmic granule. It is found in the perinuclear region. The protein resides in the endoplasmic reticulum. With respect to regulation, repressed by the specific inhibitor 3',5'-deoxythymidine bisphosphate (pdTp); this RNase activity inhibition impairs subcellular relocation upon abiotic stress and leads to reduced stress resistance. Cytoprotective ribonuclease (RNase) required for resistance to abiotic stresses, acting as a positive regulator of mRNA decapping during stress. Essential for the integrity and function of cytoplasmic messenger ribonucleoprotein (mRNP) complexes called stress granules (SGs) and processing bodies (PBs), sites of post-transcriptional gene regulation during stress (e.g. salt and heat). Involved in gibberellic acid (GA) biosynthesis. Essential for stress tolerance, probably by regulating mRNAs entering the secretory pathway. Component of stress granules (SGs) that regulates growth under salt stress by modulating levels of GA20OX3 mRNA. Binds GA20OX3 mRNA. May inhibit the degradation of mRNAs involved in stress adaptation. The sequence is that of Ribonuclease TUDOR 1 from Arabidopsis thaliana (Mouse-ear cress).